The primary structure comprises 2559 residues: Nonribosomal peptide synthetase asqK (2559 aa).

Positions 90-474 (YRPSHTAIHA…SRKDSQVKIR (385 aa)) are adenylation 1. A Carrier 1 domain is found at 593-669 (TNIEQLVHEL…SLVHYPAGLE (77 aa)). Ser-627 is subject to O-(pantetheine 4'-phosphoryl)serine. Residues 695–989 (TVEQSFSQAR…GNVQCIRTKV (295 aa)) form a condensation 1 region. Positions 1155-1562 (FDEQVRAQTD…GRMDQQVKVR (408 aa)) are adenylation 2. Residues 1681 to 1776 (LEIGTGSGMI…NTIKDLVRQG (96 aa)) form a methyltransferase region. Residues 2090–2164 (AFTSEIERAV…GLAQHLQGLG (75 aa)) form the Carrier 2 domain. The residue at position 2124 (Ser-2124) is an O-(pantetheine 4'-phosphoryl)serine. The interval 2261 to 2409 (FDGVSLSAIL…VNRCLLRVKV (149 aa)) is condensation 2.

It belongs to the NRP synthetase family.

It catalyses the reaction O-methyl-L-tyrosine + anthranilate + S-adenosyl-L-methionine + 2 ATP = (-)-4'-methoxycyclopeptine + 2 AMP + S-adenosyl-L-homocysteine + 2 diphosphate + 2 H(+). It carries out the reaction anthranilate + L-phenylalanine + S-adenosyl-L-methionine + 2 ATP = cyclopeptine + 2 AMP + S-adenosyl-L-homocysteine + 2 diphosphate + 2 H(+). The protein operates within secondary metabolite biosynthesis. Its pathway is alkaloid biosynthesis. It functions in the pathway mycotoxin biosynthesis. Functionally, nonribosomal peptide synthetase; part of the gene cluster that mediates the biosynthesis of the aspoquinolone mycotoxins. The first stage is catalyzed by the nonribosomal peptide synthetase asqK that condenses anthranilic acid and O-methyl-L-tyrosine to produce 4'-methoxycyclopeptin. AsqK is also able to use anthranilic acid and L-phenylalanine as substrates to produce cyclopeptin, but at a tenfold lower rate. Within the pathway, 4'-methoxycyclopeptin is then converted to 4'-methoxydehydrocyclopeptin by the ketoglutarate-dependent dioxygenase asqJ. AsqJ also converts its first product 4'-methoxydehydrocyclopeptin to 4'-methoxycyclopenin. The following conversion of 4'-methoxycyclopenin into 4'-methoxyviridicatin is catalyzed by the cyclopenase asqI. 4'-methoxyviridicatin is the precursor of quinolone natural products, and is further converted to quinolinone B. The prenyltransferase asqH1 then catalyzes the canonical Friedel-Crafts alkylation of quinolinone B with dimethylallyl cation to yield dimethylallyl quinolone, which is subjected to FAD-dependent dehydrogenation by the FAD-linked oxidoreductase asqF to yield conjugated aryl diene. The delta(3') double bond then serves as the site of the second alkylation with DMAPP catalyzed by the prenyltransferase asqH2 to yield a carbenium ion intermediate, which can be attacked by H(2)O to yield a styrenyl quinolone containing a C3'-hydroxyprenyl chain. The FAD-dependent monooxygenase asqG performs epoxidation of the terminal C7'-C8' olefin. Finally, after dehydratation of the epoxide at C3 by asqC, the quinolone epoxide rearrangement protein asqO catalyzes an enzymatic 3-exo-tet cyclization to yield the cyclopropyl-THF ring system in aspoquinolone. The protein is Nonribosomal peptide synthetase asqK of Emericella nidulans (strain FGSC A4 / ATCC 38163 / CBS 112.46 / NRRL 194 / M139) (Aspergillus nidulans).